The following is a 284-amino-acid chain: MSWFKRKEKGITTATEDKMDVPKGLWYKSPTGKIIDAEELARNLWVSPEDDFHVRIGSAEYFHILFDNNEFTELDANMTSKDPLGFVDTKKYADRLVDVMQKTKLKDAVRTAVGKSKGRDLVICCMDFAFIGGSMGAVVGEKIARGIDHSIKNKIPFVMISKSGGARMMEAAYSLMQLAKTSAKLAQLAEAKIPYISLCTDPTTGGTTASYAMLGDINISEPGALIGFAGPRVVRDTTGKDLPEGFQTAEFVLEHGFLDFITPRKELKDKINLYLDLILNNEVR.

The CoA carboxyltransferase N-terminal domain occupies 24-284 (GLWYKSPTGK…LDLILNNEVR (261 aa)).

It belongs to the AccD/PCCB family. In terms of assembly, acetyl-CoA carboxylase is a heterohexamer composed of biotin carboxyl carrier protein (AccB), biotin carboxylase (AccC) and two subunits each of ACCase subunit alpha (AccA) and ACCase subunit beta (AccD).

It localises to the cytoplasm. It catalyses the reaction N(6)-carboxybiotinyl-L-lysyl-[protein] + acetyl-CoA = N(6)-biotinyl-L-lysyl-[protein] + malonyl-CoA. The protein operates within lipid metabolism; malonyl-CoA biosynthesis; malonyl-CoA from acetyl-CoA: step 1/1. In terms of biological role, component of the acetyl coenzyme A carboxylase (ACC) complex. Biotin carboxylase (BC) catalyzes the carboxylation of biotin on its carrier protein (BCCP) and then the CO(2) group is transferred by the transcarboxylase to acetyl-CoA to form malonyl-CoA. The chain is Acetyl-coenzyme A carboxylase carboxyl transferase subunit beta from Flavobacterium psychrophilum (strain ATCC 49511 / DSM 21280 / CIP 103535 / JIP02/86).